The following is a 93-amino-acid chain: Small ribosomal subunit protein uS19 (93 aa).

This sequence belongs to the universal ribosomal protein uS19 family.

Its function is as follows. Protein S19 forms a complex with S13 that binds strongly to the 16S ribosomal RNA. This Geotalea uraniireducens (strain Rf4) (Geobacter uraniireducens) protein is Small ribosomal subunit protein uS19.